Consider the following 186-residue polypeptide: ATP synthase subunit delta (186 aa).

Belongs to the ATPase delta chain family. As to quaternary structure, F-type ATPases have 2 components, F(1) - the catalytic core - and F(0) - the membrane proton channel. F(1) has five subunits: alpha(3), beta(3), gamma(1), delta(1), epsilon(1). F(0) has three main subunits: a(1), b(2) and c(10-14). The alpha and beta chains form an alternating ring which encloses part of the gamma chain. F(1) is attached to F(0) by a central stalk formed by the gamma and epsilon chains, while a peripheral stalk is formed by the delta and b chains.

It localises to the cell inner membrane. F(1)F(0) ATP synthase produces ATP from ADP in the presence of a proton or sodium gradient. F-type ATPases consist of two structural domains, F(1) containing the extramembraneous catalytic core and F(0) containing the membrane proton channel, linked together by a central stalk and a peripheral stalk. During catalysis, ATP synthesis in the catalytic domain of F(1) is coupled via a rotary mechanism of the central stalk subunits to proton translocation. Its function is as follows. This protein is part of the stalk that links CF(0) to CF(1). It either transmits conformational changes from CF(0) to CF(1) or is implicated in proton conduction. The chain is ATP synthase subunit delta from Fuscovulum blasticum (Rhodobacter blasticus).